The sequence spans 182 residues: Large ribosomal subunit protein uL6 (182 aa).

It belongs to the universal ribosomal protein uL6 family. In terms of assembly, part of the 50S ribosomal subunit.

In terms of biological role, this protein binds to the 23S rRNA, and is important in its secondary structure. It is located near the subunit interface in the base of the L7/L12 stalk, and near the tRNA binding site of the peptidyltransferase center. This chain is Large ribosomal subunit protein uL6, found in Carboxydothermus hydrogenoformans (strain ATCC BAA-161 / DSM 6008 / Z-2901).